The chain runs to 347 residues: NADH-ubiquinone oxidoreductase chain 2 (347 aa).

9 helical membrane-spanning segments follow: residues 1 to 21 (MNPFVSVIIYTTIILGTMIVM), 59 to 79 (YFMTQATASMLLMLAVIINLL), 93 to 115 (TASMIMTMALAMKLGLSPFHFWV), 149 to 169 (INPNLILTMSMLSILVGGWGG), 178 to 198 (IMAYSSIAHMGWMAAILIYNP), 201 to 221 (TILNLTIYLMTTFTMFTMFAL), 239 to 259 (IITTLMLTILLSMGGLPPLTG), 274 to 294 (DSIILPTLMAIMALLNLYFYM), and 325 to 345 (LLPTMIILSTMLLPLTPMLVV).

It belongs to the complex I subunit 2 family. As to quaternary structure, core subunit of respiratory chain NADH dehydrogenase (Complex I) which is composed of 45 different subunits. Interacts with TMEM242.

It localises to the mitochondrion inner membrane. The enzyme catalyses a ubiquinone + NADH + 5 H(+)(in) = a ubiquinol + NAD(+) + 4 H(+)(out). Functionally, core subunit of the mitochondrial membrane respiratory chain NADH dehydrogenase (Complex I) which catalyzes electron transfer from NADH through the respiratory chain, using ubiquinone as an electron acceptor. Essential for the catalytic activity and assembly of complex I. This is NADH-ubiquinone oxidoreductase chain 2 from Hippopotamus amphibius (Hippopotamus).